The primary structure comprises 1464 residues: ABC transporter G family member 35 (1464 aa).

The segment at 1–26 (MDAAAEMQKVVSLRRGGGGSSSRGAA) is disordered. The region spanning 173-446 (ANALGILPNK…FELMGFKCPE (274 aa)) is the ABC transporter 1 domain. An ATP-binding site is contributed by 206–213 (GPPGSGKT). An ABC transmembrane type-2 1 domain is found at 524–737 (ELLKANIDRE…AQNAISVNEF (214 aa)). The next 7 helical transmembrane spans lie at 542-562 (FVYI…MTVF), 575-595 (GVIF…NGLS), 630-650 (IPMS…VIGF), 662-682 (LLML…GGAA), 686-706 (IVAN…GGFI), 715-735 (WWIW…ISVN), and 774-794 (IGFG…TLAL). An ABC transporter 2 domain is found at 867–1119 (LTFDNIKYSV…ELIKYFEGIK (253 aa)). Position 912 to 919 (912 to 919 (GVSGAGKT)) interacts with ATP. In terms of domain architecture, ABC transmembrane type-2 2 spans 1192–1406 (NQCLACLWKM…TLYGLVASQF (215 aa)). 7 helical membrane passes run 1213–1233 (AIRL…FWDL), 1243–1263 (LFNA…LNSQ), 1299–1319 (FPYT…MIGF), 1326–1346 (FFWY…YGMM), 1356–1376 (VASI…GFII), 1387–1407 (WYCW…SQFG), and 1436–1456 (VVAV…GFAI).

The protein belongs to the ABC transporter superfamily. ABCG family. PDR (TC 3.A.1.205) subfamily.

It localises to the membrane. Its function is as follows. May be a general defense protein. This is ABC transporter G family member 35 from Oryza sativa subsp. japonica (Rice).